The primary structure comprises 249 residues: Glutathione S-transferase tcpG (249 aa).

The region spanning 20-109 is the GST N-terminal domain; the sequence is LYVRKAIPAP…YLCDKHDKDG (90 aa). Positions 115-249 constitute a GST C-terminal domain; sequence NATERAQVTS…TEEEIELHGR (135 aa).

It belongs to the GST superfamily.

It catalyses the reaction RX + glutathione = an S-substituted glutathione + a halide anion + H(+). Its pathway is secondary metabolite biosynthesis. Glutathione S-transferase; part of the gene cluster that mediates the biosynthesis of an unusual class of epipolythiodioxopiperazines (ETPs) lacking the reactive thiol group important for toxicity. Firstly, L-tyrosine is prenylated by tcpD, before undergoing condensation with L-glycine in a reaction catalyzed by the NRPS tcpP leading to the diketopiperazine (DKP) backbone. Afterwards the alpha-carbon of tyrosine is oxidized by the cytochrome P450 tcpC to form a hydroxyl group. However, in contrast other ETP biosynthesis pathways studied so far, tcpC is not able to bishydroxylate the DKP at both alpha-carbon positions, but hydroxylates the alpha-carbon of the tyrosine part and the nitrogen of the glycine part. The next steps involve an alpha,beta-elimination reaction catalyzed by tcpI, a methylation by the methyltransferase tcpN the action of the four enzyme cascade tcpG/K/J/I. Due to a dysfunctional cytochrome P450 monooxygenase tcpC, the pathway leads to the biosynthesis of probable non-toxic metabolites lacking the reactive thiol group. The chain is Glutathione S-transferase tcpG from Claviceps purpurea (strain 20.1) (Ergot fungus).